Consider the following 330-residue polypeptide: Adenylate isopentenyltransferase 8, chloroplastic (330 aa).

The transit peptide at 1–35 (MQNLTSTFVSPSMIPITSPRLRLPPPRSVVPMTTV) directs the protein to the chloroplast. 50–57 (GATGSGKS) is an ATP binding site.

It belongs to the IPP transferase family. Expressed in roots and in immature seeds with highest expression in the chalazal endosperm.

Its subcellular location is the plastid. The protein localises to the chloroplast. It carries out the reaction dimethylallyl diphosphate + ADP = N(6)-(dimethylallyl)adenosine 5'-diphosphate + diphosphate. The catalysed reaction is dimethylallyl diphosphate + ATP = N(6)-(dimethylallyl)adenosine 5'-triphosphate + diphosphate. Involved in cytokinin biosynthesis. Catalyzes the transfer of an isopentenyl group from dimethylallyl diphosphate (DMAPP) to ATP and ADP. The protein is Adenylate isopentenyltransferase 8, chloroplastic (IPT8) of Arabidopsis thaliana (Mouse-ear cress).